The following is a 64-amino-acid chain: Bacteriocin plantaricin ASM1 (64 aa).

The first 21 residues, 1–21 (MSKLVKTLTVDEISKIQTNGG), serve as a signal peptide directing secretion. The segment at residues 61–64 (SYHC) is a cross-link (lanthionine (Ser-Cys)).

Post-translationally, contains 2 disulfide bonds.

The protein resides in the secreted. Its function is as follows. Bacteriocin with a narrow antibacterial spectrum. Antibacterial activity against the Gram-positive bacteria L.plantarun, L.pentosus, L.curvatus, L.lindneri, L.mesenteroides and E.faecilis. Lacks antibacterial activity against the Gram-positive bacteria L.brevis, L.sakei, L.lactis, P.acidilactici, B.subtilis, B.cereus, L.monocytogenes and S.aureus, and against the Gram-negative bacteria E.coli and S.typhimurium. The polypeptide is Bacteriocin plantaricin ASM1 (Lactiplantibacillus plantarum (Lactobacillus plantarum)).